Consider the following 156-residue polypeptide: 2-C-methyl-D-erythritol 2,4-cyclodiphosphate synthase (156 aa).

Residues D9 and H11 each coordinate a divalent metal cation. Residues 9-11 (DAH) and 35-36 (HS) contribute to the 4-CDP-2-C-methyl-D-erythritol 2-phosphate site. H43 serves as a coordination point for a divalent metal cation. 57–59 (DIG) serves as a coordination point for 4-CDP-2-C-methyl-D-erythritol 2-phosphate.

The protein belongs to the IspF family. Homotrimer. The cofactor is a divalent metal cation.

It catalyses the reaction 4-CDP-2-C-methyl-D-erythritol 2-phosphate = 2-C-methyl-D-erythritol 2,4-cyclic diphosphate + CMP. Its pathway is isoprenoid biosynthesis; isopentenyl diphosphate biosynthesis via DXP pathway; isopentenyl diphosphate from 1-deoxy-D-xylulose 5-phosphate: step 4/6. Functionally, involved in the biosynthesis of isopentenyl diphosphate (IPP) and dimethylallyl diphosphate (DMAPP), two major building blocks of isoprenoid compounds. Catalyzes the conversion of 4-diphosphocytidyl-2-C-methyl-D-erythritol 2-phosphate (CDP-ME2P) to 2-C-methyl-D-erythritol 2,4-cyclodiphosphate (ME-CPP) with a corresponding release of cytidine 5-monophosphate (CMP). This chain is 2-C-methyl-D-erythritol 2,4-cyclodiphosphate synthase, found in Hydrogenobaculum sp. (strain Y04AAS1).